Reading from the N-terminus, the 115-residue chain is Large ribosomal subunit protein bL20 (115 aa).

The protein belongs to the bacterial ribosomal protein bL20 family.

Binds directly to 23S ribosomal RNA and is necessary for the in vitro assembly process of the 50S ribosomal subunit. It is not involved in the protein synthesizing functions of that subunit. This Synechococcus sp. (strain CC9902) protein is Large ribosomal subunit protein bL20.